Reading from the N-terminus, the 340-residue chain is MSQSDLHQQKFHWQGRHDAEDGKLGQRIHHVVKHQKTSELEKASQGVSILGFATDAGVARNKGRIGAKKAPDLIRRALANLAWHKDAPLYDLGTVVCDDDLLEESQSRCANLISEALPHTPTIVLGGGHEIAWASFSGLAEYFKTHHPEKKPKIGIINFDAHFDLRAFESSLADVKPSSGTPFNQIHHFCQRNDWAFHYACLGVSRSSNTQALFQKADELNVWYVEDSQLNYLNHSYHLTQLQHFIDDCDYLYLTIDLDVFPAATAPGVSAPAARGVSYDTIAPFLERILHYKNKLMLADIAEYNPNYDVDSQTARLAARLCWDIANAMADKEHKRQPIK.

Mn(2+) is bound by residues histidine 129, aspartate 160, histidine 162, aspartate 164, aspartate 257, and aspartate 259.

It belongs to the arginase family. Requires Mn(2+) as cofactor.

It catalyses the reaction N-formimidoyl-L-glutamate + H2O = formamide + L-glutamate. Its pathway is amino-acid degradation; L-histidine degradation into L-glutamate; L-glutamate from N-formimidoyl-L-glutamate (hydrolase route): step 1/1. Catalyzes the conversion of N-formimidoyl-L-glutamate to L-glutamate and formamide. In Vibrio parahaemolyticus serotype O3:K6 (strain RIMD 2210633), this protein is Formimidoylglutamase.